The primary structure comprises 334 residues: Fructose-1,6-bisphosphatase class 1 (334 aa).

The Mg(2+) site is built by Glu89, Asp112, Leu114, and Asp115. Substrate is bound by residues 115–118 (DGSS), Asn208, Tyr241, and Lys271. Position 277 (Glu277) interacts with Mg(2+).

This sequence belongs to the FBPase class 1 family. In terms of assembly, homotetramer. The cofactor is Mg(2+).

The protein resides in the cytoplasm. The enzyme catalyses beta-D-fructose 1,6-bisphosphate + H2O = beta-D-fructose 6-phosphate + phosphate. It participates in carbohydrate biosynthesis; gluconeogenesis. This chain is Fructose-1,6-bisphosphatase class 1, found in Serratia proteamaculans (strain 568).